The chain runs to 22 residues: NDMA-dependent alcohol dehydrogenase (22 aa).

Belongs to the zinc-containing alcohol dehydrogenase family. In terms of assembly, homotetramer. It depends on NADH as a cofactor.

It localises to the cytoplasm. It carries out the reaction N,N-dimethyl-4-nitrosoaniline + a primary alcohol = 4-(hydroxylamino)-N,N-dimethylaniline + an aldehyde. The enzyme catalyses ethanol + A = acetaldehyde + AH2. Its function is as follows. This is a novel enzyme, catalytically different from common alcohol dehydrogenases. It is effective in oxidizing ethanol, other primary alcohols and benzylalcohol only in the presence of p-nitroso-N,N-dimethylaniline (NDMA) as an electron acceptor. NADH acts as a cofactor here instead of as a coenzyme. The sequence is that of NDMA-dependent alcohol dehydrogenase from Rhodococcus erythropolis (Arthrobacter picolinophilus).